Consider the following 667-residue polypeptide: Cylicin-1 (667 aa).

2 disordered regions span residues 121–251 (PYTH…SSNV) and 275–634 (SQNN…ILPS). Residues 129-172 (KKAESKKYKDDKKETALKKISKKDTGPHEVDEKPKRRNKADKTP) are compositionally biased toward basic and acidic residues. The span at 173 to 182 (SKSSHGSQLS) shows a compositional bias: low complexity. Residues 187–197 (SKSETNPESKD) are compositionally biased toward basic and acidic residues. The segment covering 223 to 237 (STSTKKYSKSSKNNS) has biased composition (low complexity). Residues 238–251 (DAVSETCSKNSSNV) show a composition bias toward polar residues. 9 stretches are compositionally biased toward basic and acidic residues: residues 284-326 (KKDA…KDTE), 345-371 (SKKDKKKDAKKDAASDAESGDSKDAKK), 380-394 (SKKDNKKKDAKKDAE), 417-431 (SKKDDKKKDAKKDAE), 438-464 (GDSKNAKKDSKKGKKDDKKKDAKKDAV), 483-506 (SKKDKKDLKKDDQKKPAMKSKEST), 521-533 (SKKDTKKTAKKAT), 549-558 (KKTEMFKSSD), and 583-593 (DSKKDAVEPKR). 9 tandem repeats follow at residues 287 to 305 (AKKDAKGKGSDAESVDSKD), 306 to 337 (AKKDKKGATKDTKKGAKKDTESTDAESGDSKD), 338 to 368 (AKKGKKESKKDKKKDAKKDAASDAESGDSKD), 369 to 405 (AKKDSKKGKKDSKKDNKKKDAKKDAESTDAESGDSKD), 406 to 442 (AKKDSKKGKKDSKKDDKKKDAKKDAESTDAESGDSKN), 443 to 475 (AKKDSKKGKKDDKKKDAKKDAVSTDADSESEGD), 476 to 516 (AKKS…ESKK), 517 to 547 (VKRDSKKDTKKTAKKATESSGAESDVSSKRY), and 548 to 569 (LKKTEMFKSSDAESEESLFKPG). The interval 287 to 569 (AKKDAKGKGS…ESEESLFKPG (283 aa)) is 9 X approximate tandem repeats. A compositionally biased stretch (pro residues) spans 624–633 (PLPPCEPILP).

As to quaternary structure, interacts with proteins of spermatozoa head including ACTL7A, CCIN, FAM209A and SPACA1; the interactions may be necessary for proper acrosome attachment to the nuclear envelope. As to expression, testis.

Its subcellular location is the cytoplasm. The protein resides in the cytoskeleton. It localises to the perinuclear theca. It is found in the calyx. Plays a role in the establishment of normal sperm morphology during spermatogenesis and is required for acrosome attachment to the nuclear envelope. This is Cylicin-1 (CYLC1) from Bos taurus (Bovine).